A 226-amino-acid polypeptide reads, in one-letter code: uncharacterized protein (226 aa).

To L.innocua lin2408 and lin2600.

This is an uncharacterized protein from Listeria innocua serovar 6a (strain ATCC BAA-680 / CLIP 11262).